The primary structure comprises 90 residues: Small ribosomal subunit protein bS16 (90 aa).

The protein belongs to the bacterial ribosomal protein bS16 family.

This chain is Small ribosomal subunit protein bS16, found in Bacillus pumilus (strain SAFR-032).